The primary structure comprises 177 residues: Bifunctional protein PyrR (177 aa).

The PRPP-binding signature appears at 99 to 111 (VVLVDDVLYTGRT).

Belongs to the purine/pyrimidine phosphoribosyltransferase family. PyrR subfamily.

The catalysed reaction is UMP + diphosphate = 5-phospho-alpha-D-ribose 1-diphosphate + uracil. Functionally, regulates the transcription of the pyrimidine nucleotide (pyr) operon in response to exogenous pyrimidines. Also displays a weak uracil phosphoribosyltransferase activity which is not physiologically significant. The sequence is that of Bifunctional protein PyrR from Akkermansia muciniphila (strain ATCC BAA-835 / DSM 22959 / JCM 33894 / BCRC 81048 / CCUG 64013 / CIP 107961 / Muc).